The following is a 173-amino-acid chain: Crossover junction endodeoxyribonuclease RuvC (173 aa).

Catalysis depends on residues aspartate 8, glutamate 67, and aspartate 139. Mg(2+) contacts are provided by aspartate 8, glutamate 67, and aspartate 139.

The protein belongs to the RuvC family. Homodimer which binds Holliday junction (HJ) DNA. The HJ becomes 2-fold symmetrical on binding to RuvC with unstacked arms; it has a different conformation from HJ DNA in complex with RuvA. In the full resolvosome a probable DNA-RuvA(4)-RuvB(12)-RuvC(2) complex forms which resolves the HJ. Mg(2+) is required as a cofactor.

The protein localises to the cytoplasm. The catalysed reaction is Endonucleolytic cleavage at a junction such as a reciprocal single-stranded crossover between two homologous DNA duplexes (Holliday junction).. Functionally, the RuvA-RuvB-RuvC complex processes Holliday junction (HJ) DNA during genetic recombination and DNA repair. Endonuclease that resolves HJ intermediates. Cleaves cruciform DNA by making single-stranded nicks across the HJ at symmetrical positions within the homologous arms, yielding a 5'-phosphate and a 3'-hydroxyl group; requires a central core of homology in the junction. The consensus cleavage sequence is 5'-(A/T)TT(C/G)-3'. Cleavage occurs on the 3'-side of the TT dinucleotide at the point of strand exchange. HJ branch migration catalyzed by RuvA-RuvB allows RuvC to scan DNA until it finds its consensus sequence, where it cleaves and resolves the cruciform DNA. The sequence is that of Crossover junction endodeoxyribonuclease RuvC from Aliivibrio fischeri (strain ATCC 700601 / ES114) (Vibrio fischeri).